A 388-amino-acid chain; its full sequence is Processive diacylglycerol beta-glucosyltransferase (388 aa).

The protein belongs to the glycosyltransferase 28 family. UgtP subfamily.

It is found in the cell membrane. It catalyses the reaction a 1,2-diacyl-3-O-(beta-D-glucopyranosyl)-sn-glycerol + UDP-alpha-D-glucose = a 1,2-diacyl-3-O-(beta-D-Glc-(1-&gt;6)-beta-D-Glc)-sn-glycerol + UDP + H(+). It carries out the reaction a 1,2-diacyl-3-O-(beta-D-Glc-(1-&gt;6)-beta-D-Glc)-sn-glycerol + UDP-alpha-D-glucose = a 1,2-diacyl-3-O-(beta-D-Glc-(1-&gt;6)-beta-D-Glc-(1-&gt;6)-beta-D-Glc)-sn-glycerol + UDP + H(+). The enzyme catalyses a 1,2-diacyl-sn-glycerol + UDP-alpha-D-glucose = a 1,2-diacyl-3-O-(beta-D-glucopyranosyl)-sn-glycerol + UDP + H(+). It functions in the pathway glycolipid metabolism; diglucosyl-diacylglycerol biosynthesis. In terms of biological role, processive glucosyltransferase involved in the biosynthesis of both the bilayer- and non-bilayer-forming membrane glucolipids. Is able to successively transfer up to three glucosyl residues to diacylglycerol (DAG), thereby catalyzing the formation of beta-monoglucosyl-DAG (3-O-(beta-D-glucopyranosyl)-1,2-diacyl-sn-glycerol), beta-diglucosyl-DAG (3-O-(beta-D-glucopyranosyl-beta-(1-&gt;6)-D-glucopyranosyl)-1,2-diacyl-sn-glycerol) and beta-triglucosyl-DAG (3-O-(beta-D-glucopyranosyl-beta-(1-&gt;6)-D-glucopyranosyl-beta-(1-&gt;6)-D-glucopyranosyl)-1,2-diacyl-sn-glycerol). Beta-diglucosyl-DAG is the predominant glycolipid found in Bacillales and is also used as a membrane anchor for lipoteichoic acid (LTA). The polypeptide is Processive diacylglycerol beta-glucosyltransferase (Bacillus thuringiensis (strain Al Hakam)).